We begin with the raw amino-acid sequence, 334 residues long: G-protein coupled receptor 12 (334 aa).

Residues 1–48 lie on the Extracellular side of the membrane; it reads MNEDPKVNLSGLPRDCIEAGTPENISAAVPSQGSVVESEPELVVNPWD. 2 N-linked (GlcNAc...) asparagine glycosylation sites follow: Asn8 and Asn24. A helical transmembrane segment spans residues 49 to 69; that stretch reads IVLCSSGTLICCENAVVVLII. At 70 to 78 the chain is on the cytoplasmic side; sequence FHSPSLRAP. The helical transmembrane segment at 79–99 threads the bilayer; the sequence is MFLLIGSLALADLLAGLGLII. At 100–113 the chain is on the extracellular side; the sequence is NFVFAYLLQSEATK. A helical transmembrane segment spans residues 114 to 134; that stretch reads LVTIGLIVASFSASVCSLLAI. Residues 135–158 lie on the Cytoplasmic side of the membrane; it reads TVDRYLSLYYALTYHSERTVTFTY. The chain crosses the membrane as a helical span at residues 159–179; the sequence is VMLVMLWGTSTCLGLLPVMGW. Residues 180–199 are Extracellular-facing; that stretch reads NCLRDESTCSVVRPLTKNNA. A helical transmembrane segment spans residues 200-220; it reads AILSISFLFMFALMLQLYIQI. Topologically, residues 221–252 are cytoplasmic; the sequence is CKIVMRHAHQIALQHHFLATSHYVTTRKGIST. The chain crosses the membrane as a helical span at residues 253–273; sequence LALILGTFAACWMPFTLYSLI. Residues 274 to 282 are Extracellular-facing; the sequence is ADYTYPSIY. Residues 283–303 traverse the membrane as a helical segment; that stretch reads TYATLLPATYNSIINPVIYAF. At 304–334 the chain is on the cytoplasmic side; sequence RNQEIQKALCLICCGCIPNTLSQRARSPSDV. Residue Cys317 is the site of S-palmitoyl cysteine attachment. Residues Ser330 and Ser332 each carry the phosphoserine modification.

The protein belongs to the G-protein coupled receptor 1 family. As to expression, expressed in the brain, pituitary gland and testis.

It localises to the cell membrane. In terms of biological role, receptor with constitutive G(s) signaling activity that activates cyclic AMP. Promotes neurite outgrowth and blocks myelin inhibition in neurons. The polypeptide is G-protein coupled receptor 12 (Gpr12) (Rattus norvegicus (Rat)).